The following is a 151-amino-acid chain: Mitochondrial intermembrane space import and assembly protein 40 homolog (151 aa).

A disordered region spans residues 1–35 (MGQGLSQPAQAVEEPSPPAVEAAPSSSPSPAPAPS). Over residues 7–26 (QPAQAVEEPSPPAVEAAPSS) the composition is skewed to low complexity. Disulfide bonds link cysteine 65–cysteine 67, cysteine 76–cysteine 109, and cysteine 86–cysteine 99. One can recognise a CHCH domain in the interval 73 to 117 (NGPCGSQFVDAFSCFLKSTEEEKGSDCVKPFIALQDCIKINPEAF). Short sequence motifs (cx9C motif) lie at residues 76-86 (CGSQFVDAFSC) and 99-109 (CVKPFIALQDC). Residues 123-151 (EEEENDEEAEKSNLKVRAPAWSRESKPKL) form a disordered region.

The protein localises to the mitochondrion intermembrane space. Its subcellular location is the peroxisome matrix. Functionally, required for the import and folding of small cysteine-containing proteins in the mitochondrial intermembrane space. The chain is Mitochondrial intermembrane space import and assembly protein 40 homolog from Oryza sativa subsp. japonica (Rice).